Reading from the N-terminus, the 264-residue chain is Putative hydro-lyase cgR_2449 (264 aa).

The protein belongs to the D-glutamate cyclase family.

In Corynebacterium glutamicum (strain R), this protein is Putative hydro-lyase cgR_2449.